We begin with the raw amino-acid sequence, 152 residues long: D-aminoacyl-tRNA deacylase (152 aa).

Positions 142–143 (GP) match the Gly-cisPro motif, important for rejection of L-amino acids motif.

The protein belongs to the DTD family. Homodimer.

Its subcellular location is the cytoplasm. It catalyses the reaction glycyl-tRNA(Ala) + H2O = tRNA(Ala) + glycine + H(+). The enzyme catalyses a D-aminoacyl-tRNA + H2O = a tRNA + a D-alpha-amino acid + H(+). An aminoacyl-tRNA editing enzyme that deacylates mischarged D-aminoacyl-tRNAs. Also deacylates mischarged glycyl-tRNA(Ala), protecting cells against glycine mischarging by AlaRS. Acts via tRNA-based rather than protein-based catalysis; rejects L-amino acids rather than detecting D-amino acids in the active site. By recycling D-aminoacyl-tRNA to D-amino acids and free tRNA molecules, this enzyme counteracts the toxicity associated with the formation of D-aminoacyl-tRNA entities in vivo and helps enforce protein L-homochirality. This chain is D-aminoacyl-tRNA deacylase, found in Burkholderia cenocepacia (strain HI2424).